The following is a 1217-amino-acid chain: Inactive disease resistance protein RPS4 (1217 aa).

The TIR domain occupies 14–175 (PQHQVFINFR…EIVKAVKTAL (162 aa)). Residue E88 is part of the active site. The NB-ARC domain maps to 211-472 (EQRLKDLEEK…FRSQDKDYVE (262 aa)). 11 LRR repeats span residues 260–285 (HALI…LLGE), 436–459 (PNIV…AFLD), 614–636 (LKEV…DFNP), 637–659 (INLV…DKDT), 682–706 (AEKL…MKKM), 708–728 (MLAF…EMNL), 729–749 (ISLK…PLIS), 750–774 (DNIE…KLQR), 796–818 (LKAL…EIDI), 819–842 (SFLN…SVQY), and 861–887 (LSQL…NLQC). The segment at 1162–1195 (TEGVDGRVKKKKKTRMDNGRPKKKQRSGRDDNQT) is disordered. Positions 1170–1177 (KKKKKTRM) match the Nuclear localization signal motif.

As to quaternary structure, interacts with EDS1.

Its subcellular location is the nucleus. The catalysed reaction is NAD(+) + H2O = ADP-D-ribose + nicotinamide + H(+). The polypeptide is Inactive disease resistance protein RPS4 (RPS4) (Arabidopsis thaliana (Mouse-ear cress)).